A 500-amino-acid polypeptide reads, in one-letter code: Beta-glucosidase 30 (500 aa).

A signal peptide spans 1-25; that stretch reads MGIRMGRRLLFTLFLGALFCNGVYA. Glutamine 46 is an a beta-D-glucoside binding site. N-linked (GlcNAc...) asparagine glycosylation is found at asparagine 63 and asparagine 114. Residues histidine 149 and 194–195 contribute to the a beta-D-glucoside site; that span reads NE. Glutamate 195 serves as the catalytic Proton donor. Residues cysteine 214 and cysteine 222 are joined by a disulfide bond. Residue tyrosine 338 participates in a beta-D-glucoside binding. Asparagine 363 is a glycosylation site (N-linked (GlcNAc...) asparagine). Glutamate 409 provides a ligand contact to a beta-D-glucoside. The active-site Nucleophile is the glutamate 409. Residues asparagine 416 and asparagine 417 are each glycosylated (N-linked (GlcNAc...) asparagine). A beta-D-glucoside is bound by residues tryptophan 456, 463-464, and phenylalanine 472; that span reads EW.

It belongs to the glycosyl hydrolase 1 family.

It carries out the reaction Hydrolysis of terminal, non-reducing beta-D-glucosyl residues with release of beta-D-glucose.. The chain is Beta-glucosidase 30 (BGLU30) from Oryza sativa subsp. japonica (Rice).